Reading from the N-terminus, the 282-residue chain is Probable endonuclease 4 (282 aa).

Residues His-69, His-109, Glu-145, Asp-179, His-182, His-216, Asp-229, His-231, and Glu-261 each coordinate Zn(2+).

This sequence belongs to the AP endonuclease 2 family. Requires Zn(2+) as cofactor.

It carries out the reaction Endonucleolytic cleavage to 5'-phosphooligonucleotide end-products.. Functionally, endonuclease IV plays a role in DNA repair. It cleaves phosphodiester bonds at apurinic or apyrimidinic (AP) sites, generating a 3'-hydroxyl group and a 5'-terminal sugar phosphate. The sequence is that of Probable endonuclease 4 from Chlorobium chlorochromatii (strain CaD3).